The sequence spans 67 residues: DNA gyrase inhibitor YacG (67 aa).

Zn(2+) is bound by residues Cys-10, Cys-13, Cys-29, and Cys-33.

This sequence belongs to the DNA gyrase inhibitor YacG family. Interacts with GyrB. Zn(2+) is required as a cofactor.

Functionally, inhibits all the catalytic activities of DNA gyrase by preventing its interaction with DNA. Acts by binding directly to the C-terminal domain of GyrB, which probably disrupts DNA binding by the gyrase. The sequence is that of DNA gyrase inhibitor YacG from Pasteurella multocida (strain Pm70).